The sequence spans 102 residues: Small ribosomal subunit protein uS14 (102 aa).

It belongs to the universal ribosomal protein uS14 family. As to quaternary structure, part of the 30S ribosomal subunit. Contacts proteins S3 and S10.

Functionally, binds 16S rRNA, required for the assembly of 30S particles and may also be responsible for determining the conformation of the 16S rRNA at the A site. This Ehrlichia ruminantium (strain Gardel) protein is Small ribosomal subunit protein uS14.